Here is a 207-residue protein sequence, read N- to C-terminus: Guanylate kinase (207 aa).

A Guanylate kinase-like domain is found at 4–184 (NMYYAISAPS…TLNKIKTIII (181 aa)). 11–18 (APSGTGKS) is a binding site for ATP.

This sequence belongs to the guanylate kinase family.

It is found in the cytoplasm. The enzyme catalyses GMP + ATP = GDP + ADP. Functionally, essential for recycling GMP and indirectly, cGMP. This chain is Guanylate kinase, found in Wigglesworthia glossinidia brevipalpis.